The chain runs to 250 residues: Adenosine 5'-phosphosulfate reductase (250 aa).

C119, C120, C202, and C205 together coordinate [4Fe-4S] cluster. C230 serves as the catalytic Nucleophile; cysteine thiosulfonate intermediate.

It belongs to the PAPS reductase family. CysH subfamily. [4Fe-4S] cluster is required as a cofactor.

The protein resides in the cytoplasm. It carries out the reaction [thioredoxin]-disulfide + sulfite + AMP + 2 H(+) = adenosine 5'-phosphosulfate + [thioredoxin]-dithiol. Its pathway is sulfur metabolism; hydrogen sulfide biosynthesis; sulfite from sulfate. In terms of biological role, catalyzes the formation of sulfite from adenosine 5'-phosphosulfate (APS) using thioredoxin as an electron donor. The chain is Adenosine 5'-phosphosulfate reductase from Burkholderia cepacia (Pseudomonas cepacia).